The sequence spans 266 residues: Phosphatidylglycerol--prolipoprotein diacylglyceryl transferase (266 aa).

7 helical membrane-spanning segments follow: residues 10 to 30, 56 to 76, 92 to 112, 120 to 140, 171 to 191, 199 to 219, and 233 to 253; these read VALAIGPLKIHWYGLMYLIGI, LVFWVACGVILGGRLGYVLFY, WKGGMSFHGGLLGVMLAVWWF, FFQLMDFIAPLVPIGLGAGRI, PSQLYQFALEGVALFVILWLF, ASVSGLFVLCYGIFRFVVEFV, and WLTMGQVLCVPMVLAGIALMV. R139 contacts a 1,2-diacyl-sn-glycero-3-phospho-(1'-sn-glycerol).

It belongs to the Lgt family.

Its subcellular location is the cell inner membrane. It catalyses the reaction L-cysteinyl-[prolipoprotein] + a 1,2-diacyl-sn-glycero-3-phospho-(1'-sn-glycerol) = an S-1,2-diacyl-sn-glyceryl-L-cysteinyl-[prolipoprotein] + sn-glycerol 1-phosphate + H(+). It functions in the pathway protein modification; lipoprotein biosynthesis (diacylglyceryl transfer). Its function is as follows. Catalyzes the transfer of the diacylglyceryl group from phosphatidylglycerol to the sulfhydryl group of the N-terminal cysteine of a prolipoprotein, the first step in the formation of mature lipoproteins. This chain is Phosphatidylglycerol--prolipoprotein diacylglyceryl transferase, found in Pseudomonas aeruginosa (strain LESB58).